Reading from the N-terminus, the 353-residue chain is Uroporphyrinogen decarboxylase (353 aa).

Residues 30-34 (RQAGR), aspartate 79, tyrosine 154, serine 209, and histidine 332 contribute to the substrate site.

Belongs to the uroporphyrinogen decarboxylase family. Homodimer.

Its subcellular location is the cytoplasm. It catalyses the reaction uroporphyrinogen III + 4 H(+) = coproporphyrinogen III + 4 CO2. Its pathway is porphyrin-containing compound metabolism; protoporphyrin-IX biosynthesis; coproporphyrinogen-III from 5-aminolevulinate: step 4/4. Catalyzes the decarboxylation of four acetate groups of uroporphyrinogen-III to yield coproporphyrinogen-III. In Mycobacterium ulcerans (strain Agy99), this protein is Uroporphyrinogen decarboxylase.